A 125-amino-acid polypeptide reads, in one-letter code: Cardioactive peptide (125 aa).

The signal sequence occupies residues 1 to 22 (MTVSRVCLLLLVALVYLDCCYA). The propeptide occupies 23–42 (ASIPRNFDPRLSEEIVMAPK). Cysteines 47 and 53 form a disulfide. A Cysteine amide modification is found at Cys-53. A propeptide spanning residues 57-125 (RSQGPPGMPA…RRKQKEAYIQ (69 aa)) is cleaved from the precursor.

Abdominal perivisceral organ; major neurohemal release site. Expressed in 116 neurons in post-embryonic central nervous system. Nine pairs of cells are observed in the brain, 4.5 pairs in the subesophageal ganglion, three pairs in each thoracic ganglion (T1-T3), three pairs in the first abdominal ganglion (A1), five pairs each in the second to sixth abdominal ganglia (A2-A6) and 7.5 pairs in the terminal ganglion. Expressed in every ganglion in each post-embryonic stage, except in the thoracic ganglia of first- and second-instar larvae. Colocalizes with CAP2b in median neurosecretory cells during the last larval instar through to adults.

It is found in the secreted. Its function is as follows. Cardioregulatory neurohormone that increases heart beat rate during adult wing inflation; has no effect on beat amplitude. The effect of CCAP is both ino- and chronotropic. The sequence is that of Cardioactive peptide from Manduca sexta (Tobacco hawkmoth).